A 77-amino-acid chain; its full sequence is Putative defensin-like protein 187 (77 aa).

An N-terminal signal peptide occupies residues 1 to 19 (MKNSSIMFVLIVVFLISSS). Disulfide bonds link Cys31/Cys77, Cys43/Cys71, and Cys47/Cys73.

Belongs to the DEFL family.

Its subcellular location is the secreted. In Arabidopsis thaliana (Mouse-ear cress), this protein is Putative defensin-like protein 187 (LCR42).